A 913-amino-acid polypeptide reads, in one-letter code: Pentatricopeptide repeat-containing protein At1g10270 (913 aa).

The disordered stretch occupies residues 34–138 (SLSPANEDPE…PNAPRLPDST (105 aa)). A compositionally biased stretch (polar residues) spans 64 to 73 (DPSQFQIPQN). The span at 74–84 (HTPPIPYPPIP) shows a compositional bias: pro residues. The short motif at 99–108 (ERRRRKRRLR) is the Nuclear localization signal element. Positions 108–130 (RIEPPLHALRRDPSAPPPKRDPN) are enriched in basic and acidic residues. The interval 134-167 (LPDSTSALVGQRLNLHNRVQSLIRASDLDAASKL) is leucine-zipper. 11 PPR repeats span residues 179–214 (TVFTCNAIIAAMYRAKRYSESISLFQYFFKQSNIVP), 215–250 (NVVSYNQIINAHCDEGNVDEALEVYRHILANAPFAP), 251–285 (SSVTYRHLTKGLVQAGRIGDAASLLREMLSKGQAA), 286–316 (DSTVYNNLIRGYLDLGDFDKAVEFFDELKSK), 321–355 (DGIVNATFMEYWFEKGNDKEAMESYRSLLDKKFRM), 356–390 (HPPTGNVLLEVFLKFGKKDEAWALFNEMLDNHAPP), 396–426 (NSDTVGIMVNECFKMGEFSEAINTFKKVGSK), 435–469 (DYLGYCNIVTRFCEQGMLTEAERFFAEGVSRSLPA), 470–504 (DAPSHRAMIDAYLKAERIDDAVKMLDRMVDVNLRV), 505–539 (VADFGARVFGELIKNGKLTESAEVLTKMGEREPKP), and 540–574 (DPSIYDVVVRGLCDGDALDQAKDIVGEMIRHNVGV). Positions 607–913 (RNAGQSGNTP…QEKKVVELRN (307 aa)) are disordered. The span at 639–649 (WTSQGVVHSNS) shows a compositional bias: polar residues. Low complexity-rich tracts occupy residues 650–666 (GWANGTAGQTAGGAYKA) and 673–690 (SWSNTSDNQQQQSWSNQT). The interval 674–858 (WSNTSDNQQQ…TAQQQWSNQT (185 aa)) is 14 X 11 AA approximate tandem repeats of W-x(2)-Q-x(4)-Q-x(2). Residues 691–700 (AGQQPPSWSR) are compositionally biased toward polar residues. Positions 706-727 (QQQQSWSQQSGWSSPSGHQQSW) are enriched in low complexity. Residues 728 to 761 (TNQTAGQQQPWANQTPGQQQQWANQTPGQQQQLA) are compositionally biased toward polar residues. Over residues 762 to 791 (NQTPGQQQQWANQTPGQQQQWANQNNGHQQ) the composition is skewed to low complexity. Residues 792–814 (PWANQNTGHQQSWANQTPSQQQP) are compositionally biased toward polar residues. The span at 815 to 845 (WANQTTGQQQGWGNQTTGQQQQWANQTAGQQ) shows a compositional bias: low complexity. Polar residues-rich tracts occupy residues 846–867 (SGWTAQQQWSNQTASHQQSQWL) and 875–894 (ANQTPWSNSVDSHLPQQQEP). Over residues 899-913 (ECQETQEKKVVELRN) the composition is skewed to basic and acidic residues.

It belongs to the PPR family. P subfamily. As to quaternary structure, interacts with RPB36B through its WQQ domain. As to expression, ubiquitous but preferentially expressed in gametophytes and young embryos.

It localises to the nucleus. In terms of biological role, may function as a transcriptional regulator essential for early embryogenesis. This Arabidopsis thaliana (Mouse-ear cress) protein is Pentatricopeptide repeat-containing protein At1g10270 (GRP23).